A 145-amino-acid chain; its full sequence is 3-dehydroquinate dehydratase (145 aa).

Tyrosine 23 functions as the Proton acceptor in the catalytic mechanism. Substrate-binding residues include asparagine 74, histidine 80, and aspartate 87. The active-site Proton donor is the histidine 100. Substrate-binding positions include 101 to 102 (IS) and arginine 111.

This sequence belongs to the type-II 3-dehydroquinase family. As to quaternary structure, homododecamer.

The enzyme catalyses 3-dehydroquinate = 3-dehydroshikimate + H2O. It participates in metabolic intermediate biosynthesis; chorismate biosynthesis; chorismate from D-erythrose 4-phosphate and phosphoenolpyruvate: step 3/7. Catalyzes a trans-dehydration via an enolate intermediate. This is 3-dehydroquinate dehydratase from Mycobacterium leprae (strain Br4923).